The following is a 559-amino-acid chain: Transmembrane E3 ubiquitin-protein ligase FLY2 (559 aa).

The N-terminal stretch at 1–29 (MNNLGNFGVWGFGFFSLSIWFAVLQQANG) is a signal peptide. Over 30–259 (LRPIRETARS…TSINVEVYYN (230 aa)) the chain is Lumenal. A helical transmembrane segment spans residues 260–280 (KAVNYTLMVTFVSFLQVLLLI). Residues 281–294 (RQMEHSNTQSGAAK) lie on the Cytoplasmic side of the membrane. The chain crosses the membrane as a helical span at residues 295–315 (VSIVMIGQQAIMDSYLCLLHL). The Lumenal segment spans residues 316 to 318 (TAG). The helical transmembrane segment at 319-339 (ILVESLFNAFATAAFFKFVVF) threads the bilayer. Residues 340-370 (SIFEMRYLLSIWKATRPSTSGEGWETMRREL) are Cytoplasmic-facing. A helical membrane pass occupies residues 371 to 391 (SFLYSRFYGILLGGILLMYEF). Residues 392–394 (HNY) lie on the Lumenal side of the membrane. Residues 395-415 (MRPILLLMYSFWIPQIVANVV) form a helical membrane-spanning segment. Topologically, residues 416–423 (RDSRKPLH) are cytoplasmic. Residues 424–444 (PYYILGMTVTRLAIPLYVFGC) form a helical membrane-spanning segment. Topologically, residues 445–458 (PKNFMRVEPSKAWC) are lumenal. A helical transmembrane segment spans residues 459 to 479 (VSLCAFMGFQAGVLLLQHYFG). The Cytoplasmic segment spans residues 480–559 (SRCFVPRKLL…PTCRRPLPPA (80 aa)). The RING-type; atypical zinc finger occupies 509–553 (CVICMTTIDLRHRINDCMVTPCEHIFHSGCLQRWMDIKMECPTCR).

In terms of tissue distribution, highly expressed in stems. Expressed in root xylem and seed coat.

It localises to the endomembrane system. It catalyses the reaction S-ubiquitinyl-[E2 ubiquitin-conjugating enzyme]-L-cysteine + [acceptor protein]-L-lysine = [E2 ubiquitin-conjugating enzyme]-L-cysteine + N(6)-ubiquitinyl-[acceptor protein]-L-lysine.. The protein operates within protein modification; protein ubiquitination. E3 ubiquitin-protein ligase that may be involved in xylem development. In Arabidopsis thaliana (Mouse-ear cress), this protein is Transmembrane E3 ubiquitin-protein ligase FLY2.